The primary structure comprises 227 residues: Putative methylase YubD (227 aa).

This sequence belongs to the N(4)/N(6)-methyltransferase family.

Its function is as follows. A putative beta subtype methylase whose recognition site is unknown. This Escherichia coli (strain K12) protein is Putative methylase YubD (yubD).